Here is a 54-residue protein sequence, read N- to C-terminus: Ovomucoid (54 aa).

The Kazal-like domain occupies 4 to 54 (VDCSDYPKPVCSLEYMPLCGSDNKTYGNKCNFCNAVADSNGTLTLSHFGKC). 3 cysteine pairs are disulfide-bonded: cysteine 6-cysteine 36, cysteine 14-cysteine 33, and cysteine 22-cysteine 54. Asparagine 43 is a glycosylation site (N-linked (GlcNAc...) asparagine).

It is found in the secreted. The chain is Ovomucoid from Guira guira (Guira cuckoo).